The chain runs to 678 residues: MGDSHEDTSATVPEAVAEEVSLFSTTDIVLFSLIVGVLTYWFIFKKKKEEIPEFSKIQTTAPPVKESSFVEKMKKTGRNIIVFYGSQTGTAEEFANRLSKDAHRYGMRGMSADPEEYDLADLSSLPEIDKSLVVFCMATYGEGDPTDNAQDFYDWLQETDVDLTGVKFAVFGLGNKTYEHFNAMGKYVDQRLEQLGAQRIFELGLGDDDGNLEEDFITWREQFWPAVCEFFGVEATGEESSIRQYELVVHEDMDTAKVYTGEMGRLKSYENQKPPFDAKNPFLAAVTTNRKLNQGTERHLMHLELDISDSKIRYESGDHVAVYPANDSTLVNQIGEILGADLDVIMSLNNLDEESNKKHPFPCPTTYRTALTYYLDITNPPRTNVLYELAQYASEPSEQEHLHKMASSSGEGKELYLSWVVEARRHILAILQDYPSLRPPIDHLCELLPRLQARYYSIASSSKVHPNSVHICAVAVEYEAKSGRVNKGVATSWLRTKEPAGENGRRALVPMFVRKSQFRLPFKPTTPVIMVGPGTGVAPFMGFIQERAWLREQGKEVGETLLYYGCRRSDEDYLYREELARFHKDGALTQLNVAFSREQAHKVYVQHLLKRDKEHLWKLIHEGGAHIYVCGDARNMAKDVQNTFYDIVAEFGPMEHTQAVDYVKKLMTKGRYSLDVWS.

N-acetylglycine is present on glycine 2. The Lumenal segment spans residues 2 to 22 (GDSHEDTSATVPEAVAEEVSL). A helical membrane pass occupies residues 23–43 (FSTTDIVLFSLIVGVLTYWFI). At 44 to 678 (FKKKKEEIPE…KGRYSLDVWS (635 aa)) the chain is on the cytoplasmic side. The Flavodoxin-like domain maps to 80 to 224 (IIVFYGSQTG…DFITWREQFW (145 aa)). Residues 86–91 (SQTGTA), 138–141 (ATYG), 173–182 (LGNKTYEHFN), and aspartate 208 each bind FMN. The FAD-binding FR-type domain maps to 279-521 (KNPFLAAVTT…FVRKSQFRLP (243 aa)). Arginine 298 contacts NADP(+). FAD-binding positions include arginine 424, 454–457 (RYYS), 472–474 (CAV), tyrosine 478, and 488–491 (GVAT). Residues threonine 535, 596 to 597 (SR), 602 to 606 (KVYVQ), and aspartate 639 each bind NADP(+). Residue tryptophan 677 coordinates FAD.

This sequence belongs to the NADPH--cytochrome P450 reductase family. The protein in the N-terminal section; belongs to the flavodoxin family. In the C-terminal section; belongs to the flavoprotein pyridine nucleotide cytochrome reductase family. FAD serves as cofactor. FMN is required as a cofactor.

The protein resides in the endoplasmic reticulum membrane. The enzyme catalyses 2 oxidized [cytochrome P450] + NADPH = 2 reduced [cytochrome P450] + NADP(+) + H(+). In terms of biological role, this enzyme is required for electron transfer from NADP to cytochrome P450 in microsomes. It can also provide electron transfer to heme oxygenase and cytochrome B5. This chain is NADPH--cytochrome P450 reductase, found in Mus musculus (Mouse).